We begin with the raw amino-acid sequence, 695 residues long: Hypersensitivity response secretion protein HrpI (695 aa).

7 helical membrane-spanning segments follow: residues 21–38 (LVGA…ITPL), 45–61 (VLIA…IMLA), 68–92 (LAFS…VSTT), 111–135 (FVVG…FLVI), 203–223 (AIAS…IGVL), 244–262 (GLIA…GMII), and 311–327 (VFIT…LLQL).

Belongs to the FHIPEP (flagella/HR/invasion proteins export pore) family.

It is found in the cell inner membrane. Functionally, involved in the secretion of harpin-pss; a proteinaceous elicitor of the hypersensitivity response in plants. The sequence is that of Hypersensitivity response secretion protein HrpI (hrpI) from Pseudomonas syringae pv. syringae.